Reading from the N-terminus, the 200-residue chain is UPF0301 protein BOV_0485 (200 aa).

This sequence belongs to the UPF0301 (AlgH) family.

The chain is UPF0301 protein BOV_0485 from Brucella ovis (strain ATCC 25840 / 63/290 / NCTC 10512).